The primary structure comprises 148 residues: Large ribosomal subunit protein bL9 (148 aa).

It belongs to the bacterial ribosomal protein bL9 family.

In terms of biological role, binds to the 23S rRNA. The chain is Large ribosomal subunit protein bL9 from Staphylococcus epidermidis (strain ATCC 35984 / DSM 28319 / BCRC 17069 / CCUG 31568 / BM 3577 / RP62A).